Reading from the N-terminus, the 283-residue chain is DegV domain-containing protein CPE0304 (283 aa).

Residues V3–R281 enclose the DegV domain. The hexadecanoate site is built by S60 and S92.

Its function is as follows. May bind long-chain fatty acids, such as palmitate, and may play a role in lipid transport or fatty acid metabolism. The sequence is that of DegV domain-containing protein CPE0304 from Clostridium perfringens (strain 13 / Type A).